We begin with the raw amino-acid sequence, 138 residues long: Sporulation-specific cell division protein SsgB (138 aa).

It belongs to the SsgA family. Monomer. Interacts with SsgA. Interacts with FtsZ (via N-terminus).

It is found in the cell septum. Its function is as follows. Involved in sporulation-specific cell division. Required for early stages of sporulation. Important in the process of growth cessation prior to sporulation-specific cell division. Recruits cell division protein FtsZ to the future septum sites and tethers the contractile ring structure (Z ring) to the cytoplasmic membrane during sporulation. Stimulates polymerization and filament length of FtsZ in vitro. The protein is Sporulation-specific cell division protein SsgB of Thermobifida fusca (strain YX).